The sequence spans 507 residues: MEADKTSEGPPATQDAKKHPSLTVPHAEDLPEATTPESPPHLLSSQEYFQPPKVHSKTYPSLDLGTKDSEDLQDPSVSETPLKLDTANLPSTPSQSSAQSVISLERAISKIPLDDFIYENSISEVQEEPLPLSPTTDISKYEYPISDVQEEPLLLSPTTNISKYEDSISDVQEEPLEDTPTADISETEYSISDVQEEPLEPPPTADIPESEDYISDDHEEPLEPPPTADIPESSYEFISDKVPQTQVPESEPFPKHSVPEPSAQAKEAASADEEEAEEEELTGGTSKTAAAGSEHHARKKKEKRGCESRPVVPAKRAELVEMAKAMHRKQFDDQVNDLFQWEKNSSLKAIQTGIYIGWRCPHYLWDCFRIGDESKCFCGHLLKEHQIISDLSVPCSVSQCRCLMFCFIPSRPEEVGEFWLKKRATFDPKAWRAQCRCKHTHEEHAATGSHPCRHRGCYCNSFESNFLCAACDRRWEEHETFFETEETKRRGKRPYGTNTAKNRHRPF.

3 disordered regions span residues 1 to 100 (MEAD…SAQS), 154 to 310 (LLSP…ESRP), and 486 to 507 (ETKR…HRPF). The segment covering 88–100 (NLPSTPSQSSAQS) has biased composition (polar residues). The segment covering 167–177 (SISDVQEEPLE) has biased composition (acidic residues). Positions 182 to 193 (ADISETEYSISD) are enriched in polar residues. 2 stretches are compositionally biased toward acidic residues: residues 208–222 (PESE…EEPL) and 270–281 (SADEEEAEEEEL). The residue at position 270 (S270) is a Phosphoserine.

The protein belongs to the FAM221 family.

This Rattus norvegicus (Rat) protein is Protein FAM221B (Fam221b).